Here is a 555-residue protein sequence, read N- to C-terminus: MPTTVDDVLEHGGEFHFFQKQMFFLLALLSATFTPIYVGIVFLGFTPDHRCRSPGVAELSLRCGWSPAEELNYTVPGPGPAGEASPRQCGRYEVDWNQSAFGCVDPLASLDTNRSRLPLGPCREGWVYETPGSSIVTEFNLVCANSWMLDLFQASVNVGFFFGSVSIGYIADRFGRKLCLLTTVLINAAAGVLMAISPTYTWMLIFRLIQGLVSKAGWLIGYILITEFVGRRYRRTVGIFYQVAYTVGLLVLAGVAYALPHWRWLQFTVTLPNFFFLLYYWCIPESPRWLISQNKNAEAMRIIKHIAKKNGKSLPASLQCLRLEEETGEKLNPSFLDLVRTPQIRKHTMILMYNWFTSSVLYQGLIMHMGLAGDNIYLDFFYSALVEFPAAFMIIVTIDRIGRRYPWAASNMVAGAACLASVFIPGDLQWLKIIISCLGRMGITMAYEIVRLVNAELYPTFIRNLGVHICSSMCDIGGIITPFLVYRLTNIWLELPLMVFGVLGLVAGGLVLLLPETKGKALPETIEEAENMQRPRKNKEKMIYLQVQKLDIPLN.

Over 1-21 the chain is Cytoplasmic; that stretch reads MPTTVDDVLEHGGEFHFFQKQ. Residues 22 to 42 traverse the membrane as a helical segment; the sequence is MFFLLALLSATFTPIYVGIVF. Over 43-150 the chain is Extracellular; sequence LGFTPDHRCR…LVCANSWMLD (108 aa). The N-linked (GlcNAc...) asparagine glycan is linked to N72. A helical membrane pass occupies residues 151 to 171; it reads LFQASVNVGFFFGSVSIGYIA. The Cytoplasmic portion of the chain corresponds to 172-177; it reads DRFGRK. The chain crosses the membrane as a helical span at residues 178–198; it reads LCLLTTVLINAAAGVLMAISP. Over 199–210 the chain is Extracellular; it reads TYTWMLIFRLIQ. Residues 211-231 form a helical membrane-spanning segment; the sequence is GLVSKAGWLIGYILITEFVGR. Topologically, residues 232 to 238 are cytoplasmic; that stretch reads RYRRTVG. The chain crosses the membrane as a helical span at residues 239 to 259; it reads IFYQVAYTVGLLVLAGVAYAL. The Extracellular segment spans residues 260–263; it reads PHWR. A helical membrane pass occupies residues 264–284; sequence WLQFTVTLPNFFFLLYYWCIP. A Proline-rich sequence motif is present at residues 284-288; that stretch reads PESPR. Over 285–348 the chain is Cytoplasmic; that stretch reads ESPRWLISQN…VRTPQIRKHT (64 aa). A helical transmembrane segment spans residues 349–369; that stretch reads MILMYNWFTSSVLYQGLIMHM. Residues 370–375 lie on the Extracellular side of the membrane; sequence GLAGDN. The chain crosses the membrane as a helical span at residues 376–396; sequence IYLDFFYSALVEFPAAFMIIV. At 397–404 the chain is on the cytoplasmic side; that stretch reads TIDRIGRR. A helical membrane pass occupies residues 405 to 425; that stretch reads YPWAASNMVAGAACLASVFIP. Residues 426 to 432 lie on the Extracellular side of the membrane; it reads GDLQWLK. A helical membrane pass occupies residues 433 to 453; sequence IIISCLGRMGITMAYEIVRLV. At 454-464 the chain is on the cytoplasmic side; sequence NAELYPTFIRN. The helical transmembrane segment at 465-485 threads the bilayer; that stretch reads LGVHICSSMCDIGGIITPFLV. Topologically, residues 486-494 are extracellular; the sequence is YRLTNIWLE. Residues 495–515 traverse the membrane as a helical segment; the sequence is LPLMVFGVLGLVAGGLVLLLP. Topologically, residues 516-555 are cytoplasmic; the sequence is ETKGKALPETIEEAENMQRPRKNKEKMIYLQVQKLDIPLN.

Belongs to the major facilitator (TC 2.A.1) superfamily. Organic cation transporter (TC 2.A.1.19) family. Post-translationally, tyrosine phosphorylated.

The protein resides in the basolateral cell membrane. Its subcellular location is the basal cell membrane. It localises to the apical cell membrane. It catalyses the reaction (R)-noradrenaline(out) = (R)-noradrenaline(in). The catalysed reaction is (R)-adrenaline(out) = (R)-adrenaline(in). It carries out the reaction serotonin(out) = serotonin(in). The enzyme catalyses dopamine(out) = dopamine(in). It catalyses the reaction histamine(out) = histamine(in). The catalysed reaction is thiamine(in) = thiamine(out). It carries out the reaction creatinine(in) = creatinine(out). The enzyme catalyses 1-methylnicotinamide(out) = 1-methylnicotinamide(in). It catalyses the reaction guanidine(out) = guanidine(in). The catalysed reaction is choline(out) = choline(in). It carries out the reaction agmatine(out) = agmatine(in). The enzyme catalyses putrescine(out) = putrescine(in). It catalyses the reaction spermidine(in) = spermidine(out). The catalysed reaction is tyramine(in) = tyramine(out). It carries out the reaction L-histidyl-L-proline diketopiperazine(in) = L-histidyl-L-proline diketopiperazine(out). The enzyme catalyses (R)-salsolinol(in) = (R)-salsolinol(out). It catalyses the reaction N-methyl-(R)-salsolinol(in) = N-methyl-(R)-salsolinol(out). The catalysed reaction is acetylcholine(in) = acetylcholine(out). It carries out the reaction prostaglandin F2alpha(out) = prostaglandin F2alpha(in). The enzyme catalyses prostaglandin E2(out) = prostaglandin E2(in). Tyrosine phosphorylation of the transporter leads to activation of the transport activity. Inhibited by cGMP, most likely through a cGMP-binding protein that interacts with OCT2. Functionally, electrogenic voltage-dependent transporter that mediates the transport of a variety of organic cations such as endogenous bioactive amines, cationic drugs and xenobiotics. Functions as a Na(+)-independent, bidirectional uniporter. Cation cellular uptake or release is driven by the electrochemical potential, i.e. membrane potential and concentration gradient. However, may also engage electroneutral cation exchange when saturating concentrations of cation substrates are reached. Predominantly expressed at the basolateral membrane of hepatocytes and proximal tubules and involved in the uptake and disposition of cationic compounds by hepatic and renal clearance from the blood flow. Implicated in monoamine neurotransmitters uptake such as histamine, dopamine, adrenaline/epinephrine, noradrenaline/norepinephrine, serotonin and tyramine, thereby supporting a physiological role in the central nervous system by regulating interstitial concentrations of neurotransmitters. Also capable of transporting dopaminergic neuromodulators cyclo(his-pro), salsolinol and N-methyl-salsolinol, thereby involved in the maintenance of dopaminergic cell integrity in the central nervous system. Mediates the bidirectional transport of acetylcholine (ACh) at the apical membrane of ciliated cell in airway epithelium, thereby playing a role in luminal release of ACh from bronchial epithelium. Also transports guanidine and endogenous monoamines such as vitamin B1/thiamine, creatinine and N-1-methylnicotinamide (NMN). Mediates the uptake and efflux of quaternary ammonium compound choline. Mediates the bidirectional transport of polyamine agmatine and the uptake of polyamines putrescine and spermidine. Able to transport non-amine endogenous compounds such as prostaglandin E2 (PGE2) and prostaglandin F2-alpha (PGF2-alpha). Also involved in the uptake of xenobiotic 4-(4-(dimethylamino)styryl)-N-methylpyridinium (ASP). May contribute to regulate the transport of organic compounds in testis across the blood-testis-barrier. This Pongo abelii (Sumatran orangutan) protein is Solute carrier family 22 member 2 (SLC22A2).